Here is a 644-residue protein sequence, read N- to C-terminus: Threonine--tRNA ligase (644 aa).

The TGS domain maps to 8 to 70 (VKAMVITLRD…EEDGELEILT (63 aa)). The interval 251–541 (DHRKLGKELD…LTEHFAGAFP (291 aa)) is catalytic. Zn(2+) contacts are provided by C342, H393, and H518.

The protein belongs to the class-II aminoacyl-tRNA synthetase family. In terms of assembly, homodimer. Requires Zn(2+) as cofactor.

The protein resides in the cytoplasm. The catalysed reaction is tRNA(Thr) + L-threonine + ATP = L-threonyl-tRNA(Thr) + AMP + diphosphate + H(+). Catalyzes the attachment of threonine to tRNA(Thr) in a two-step reaction: L-threonine is first activated by ATP to form Thr-AMP and then transferred to the acceptor end of tRNA(Thr). Also edits incorrectly charged L-seryl-tRNA(Thr). This is Threonine--tRNA ligase from Caldanaerobacter subterraneus subsp. tengcongensis (strain DSM 15242 / JCM 11007 / NBRC 100824 / MB4) (Thermoanaerobacter tengcongensis).